The following is a 227-amino-acid chain: 2,3-bisphosphoglycerate-dependent phosphoglycerate mutase (227 aa).

Residues 8 to 15 (RHGKSVWN), 21 to 22 (TG), arginine 58, 110 to 113 (ERMY), lysine 121, 137 to 138 (RR), and 181 to 182 (GN) each bind substrate. Residue histidine 9 is the Tele-phosphohistidine intermediate of the active site. Catalysis depends on glutamate 110, which acts as the Proton donor/acceptor.

This sequence belongs to the phosphoglycerate mutase family. BPG-dependent PGAM subfamily.

The catalysed reaction is (2R)-2-phosphoglycerate = (2R)-3-phosphoglycerate. It participates in carbohydrate degradation; glycolysis; pyruvate from D-glyceraldehyde 3-phosphate: step 3/5. Functionally, catalyzes the interconversion of 2-phosphoglycerate and 3-phosphoglycerate. The chain is 2,3-bisphosphoglycerate-dependent phosphoglycerate mutase from Chlamydia felis (strain Fe/C-56) (Chlamydophila felis).